Consider the following 424-residue polypeptide: Serine--tRNA ligase (424 aa).

229 to 231 (TAE) provides a ligand contact to L-serine. Residues 260-262 (RKE) and Val276 each bind ATP. Glu283 contacts L-serine. 347 to 350 (ELVS) provides a ligand contact to ATP. Position 383 (Thr383) interacts with L-serine.

Belongs to the class-II aminoacyl-tRNA synthetase family. Type-1 seryl-tRNA synthetase subfamily. Homodimer. The tRNA molecule binds across the dimer.

The protein resides in the cytoplasm. The catalysed reaction is tRNA(Ser) + L-serine + ATP = L-seryl-tRNA(Ser) + AMP + diphosphate + H(+). It carries out the reaction tRNA(Sec) + L-serine + ATP = L-seryl-tRNA(Sec) + AMP + diphosphate + H(+). The protein operates within aminoacyl-tRNA biosynthesis; selenocysteinyl-tRNA(Sec) biosynthesis; L-seryl-tRNA(Sec) from L-serine and tRNA(Sec): step 1/1. In terms of biological role, catalyzes the attachment of serine to tRNA(Ser). Is also able to aminoacylate tRNA(Sec) with serine, to form the misacylated tRNA L-seryl-tRNA(Sec), which will be further converted into selenocysteinyl-tRNA(Sec). The chain is Serine--tRNA ligase from Methanosphaera stadtmanae (strain ATCC 43021 / DSM 3091 / JCM 11832 / MCB-3).